A 364-amino-acid polypeptide reads, in one-letter code: MEHNASDAVGTRDAGWQTDMCHRTSGTAEQGGSKNKGRGGRREQSHIRAYSSASADGYRMHRNHTGGAESPGAEQGTPPRRNSVLKRRSLIQTIMSPEGGAASPERGRRSVSLYSPASAGSDEGDVGAMLQTLATRELALLEQRKTVEDLRRALRLEERVLVAQARELEELKQRVARALDAGSPRAVLEPGAELPGAPGARESVWAKSMSFLNEFDQILQEGLEKRLGFDELMPSPATDATTPEADDRRGIWGLVSEFKAGLLGLSDSTPPPDAPAAYLEKQRNRSVGPEPRRTNTGDAVAEHSRDARYARKRDLHEQAYSPADAAAENGVVTGGRLGATPHSSGSIRKRCPPLSTSVEMQNYV.

Disordered regions lie at residues methionine 1–arginine 81 and isoleucine 94–serine 121. Residues threonine 24–serine 33 are compositionally biased toward polar residues. Residues alanine 139–alanine 181 adopt a coiled-coil conformation. Disordered regions lie at residues leucine 263–arginine 305 and aspartate 324–proline 352. Residues glutamate 290 to arginine 305 show a composition bias toward basic and acidic residues.

This sequence belongs to the TDA11 family.

It localises to the cytoplasm. This chain is Topoisomerase I damage affected protein 11 (TDA11), found in Eremothecium gossypii (strain ATCC 10895 / CBS 109.51 / FGSC 9923 / NRRL Y-1056) (Yeast).